The primary structure comprises 481 residues: tRNA pseudouridine(38/39) synthase (481 aa).

N-acetylalanine is present on Ala2. A compositionally biased stretch (basic and acidic residues) spans 29-40 (KKEQANNKDSNI). A disordered region spans residues 29–54 (KKEQANNKDSNIRENSSGAGGKPKRA). The active-site Nucleophile is Asp118. Residue Tyr195 coordinates substrate. Phosphothreonine is present on Thr456.

The protein belongs to the tRNA pseudouridine synthase TruA family.

The protein resides in the nucleus. It carries out the reaction uridine(38/39) in tRNA = pseudouridine(38/39) in tRNA. Functionally, formation of pseudouridine at position 39 in the anticodon stem and loop of transfer RNAs. This is tRNA pseudouridine(38/39) synthase (PUS3) from Bos taurus (Bovine).